A 271-amino-acid chain; its full sequence is S-adenosylmethionine decarboxylase proenzyme (271 aa).

The active-site Schiff-base intermediate with substrate; via pyruvic acid is Ser121. Pyruvic acid (Ser); by autocatalysis is present on Ser121. His126 functions as the Proton acceptor; for processing activity in the catalytic mechanism. The active-site Proton donor; for catalytic activity is the Cys149.

This sequence belongs to the prokaryotic AdoMetDC family. Type 2 subfamily. In terms of assembly, heterooctamer of four alpha and four beta chains arranged as a tetramer of alpha/beta heterodimers. It depends on pyruvate as a cofactor. In terms of processing, is synthesized initially as an inactive proenzyme. Formation of the active enzyme involves a self-maturation process in which the active site pyruvoyl group is generated from an internal serine residue via an autocatalytic post-translational modification. Two non-identical subunits are generated from the proenzyme in this reaction, and the pyruvate is formed at the N-terminus of the alpha chain, which is derived from the carboxyl end of the proenzyme. The post-translation cleavage follows an unusual pathway, termed non-hydrolytic serinolysis, in which the side chain hydroxyl group of the serine supplies its oxygen atom to form the C-terminus of the beta chain, while the remainder of the serine residue undergoes an oxidative deamination to produce ammonia and the pyruvoyl group blocking the N-terminus of the alpha chain.

It catalyses the reaction S-adenosyl-L-methionine + H(+) = S-adenosyl 3-(methylsulfanyl)propylamine + CO2. It functions in the pathway amine and polyamine biosynthesis; S-adenosylmethioninamine biosynthesis; S-adenosylmethioninamine from S-adenosyl-L-methionine: step 1/1. Functionally, catalyzes the decarboxylation of S-adenosylmethionine to S-adenosylmethioninamine (dcAdoMet), the propylamine donor required for the synthesis of the polyamines spermine and spermidine from the diamine putrescine. The chain is S-adenosylmethionine decarboxylase proenzyme from Clostridium beijerinckii (strain ATCC 51743 / NCIMB 8052) (Clostridium acetobutylicum).